The sequence spans 257 residues: Transmembrane protein C257L (257 aa).

A run of 2 helical transmembrane segments spans residues 123–143 (LELL…FTAL) and 163–183 (MMIF…YVLV).

The protein belongs to the asfivirus C257R family.

It localises to the host membrane. The protein resides in the virion. The protein is Transmembrane protein C257L of African swine fever virus (strain Badajoz 1971 Vero-adapted) (Ba71V).